Reading from the N-terminus, the 37-residue chain is Tick defensin 2 (37 aa).

3 disulfide bridges follow: Cys-4–Cys-26, Cys-11–Cys-34, and Cys-15–Cys-36.

The protein belongs to the invertebrate defensin family.

The protein resides in the secreted. Functionally, antibacterial peptide mostly active against Gram-positive bacteria (MIC=0.24 ug/ml on Bacillus subtilis, and MIC=0.94 ug/ml on Micrococcus luteus, MIC&gt;120 ug/ml on both Escherichia coli and Pseudomonas aeruginosa). The sequence is that of Tick defensin 2 from Ornithodoros savignyi (African eyed tampan).